The primary structure comprises 791 residues: MSRVVSRTVPGGACVVNKDDFLKSFNDVDKVSVSSLADAKSKFDQVIAILSKSQEDWNKRRTQLQIIRSIVINCEDVIGRDQLLGQLVRLADCLDLSVKDLRSQILREAAITCSFLFEKYGNDVHQIAERCLPTAFSQLAVSTKVMATSGATLTLFLVQYVQTKQIFTCLTTYSTSKDKNQRRQLCVLLEIVIEHWNDKLKKSILPQIMELIKSAISDADPETRAAGRKAFNKLDAIHSEEADKLFASVDANKQKMLRASDAASSSTSVNSERGSAPFRSKLSAGSVGGMRNVPNISSKFLAQRSASAIDTKQVTRMTTSVSRTPNTRPMTTRTLSKVDTSPGGSKFARPTVGTLGPRTTSNLRARGSVPTSQPGSRNGSPPRRPSTTGTLPMEMQRVKSNLGSSSFVSSLTPDQAESLQKAMNTAKESLGQPSRTEDDEFLLPKRKPKTPQKSAVDISRVEAVIRACVSTSANEKRDGIKMLSIIVSEPNLSQIELKNIGQVLNRLLGEATNPVVLESVASFVKAHHSRLSEWLKLGLGKMFAKKGSEMMPIMKKHIVTTINAILSSFDPALQLKATCELMCDPIHLLSPKARVALLEYLTDLLEKHMERGSPFNTKEVKATILKMFSWMSDQRNMQQIVPHGEKVLCGLFALNAADFSALFNDFNPDYREWAYRILQAHGHNQHAPAPESPSPVRDQQVRANISNTAAQIEDFVVARNFELSAEKSPTSRGMLTSGFKRTDAEPLRPLESDMNTQRMDDISINESFDRLKVRILETTGFYAAFKVDFQE.

3 stretches are compositionally biased toward low complexity: residues 259-271 (ASDA…SVNS), 323-334 (RTPNTRPMTTRT), and 372-381 (SQPGSRNGSP). 3 disordered regions span residues 259 to 283 (ASDA…SKLS), 315 to 391 (TRMT…TGTL), and 422 to 454 (AMNT…PQKS). Residues 422–434 (AMNTAKESLGQPS) show a composition bias toward polar residues.

Belongs to the CLASP family. Interacts with hcp-1 and hcp-2.

It is found in the cytoplasm. The protein localises to the cytoskeleton. It localises to the microtubule organizing center. Its subcellular location is the centrosome. The protein resides in the chromosome. It is found in the centromere. The protein localises to the kinetochore. It localises to the spindle. Its function is as follows. Probable microtubule plus-end tracking protein that promotes the stabilization of dynamic microtubules. Required for the formation of mitotic and meiotic spindles. Specifically promotes the polymerization of kinetochore-bound microtubules. Also required for cytoplasmic streaming. The polypeptide is Protein CLASP-2 (cls-2) (Caenorhabditis briggsae).